We begin with the raw amino-acid sequence, 441 residues long: 3-oxo-glucose-6-phosphate:glutamate aminotransferase (441 aa).

A substrate-binding site is contributed by 98-99 (TS). 125 to 126 (GT) is a pyridoxal 5'-phosphate binding site. Substrate is bound at residue Phe-151. Pyridoxal 5'-phosphate-binding residues include Gln-225 and Ser-242. 244 to 246 (NPY) is a substrate binding site. At Lys-247 the chain carries N6-(pyridoxal phosphate)lysine. Residues Tyr-274 and Lys-282 each contribute to the substrate site. Asn-292 is a pyridoxal 5'-phosphate binding site. Residue Tyr-379 coordinates substrate.

The protein belongs to the DegT/DnrJ/EryC1 family. As to quaternary structure, homodimer. Pyridoxal 5'-phosphate is required as a cofactor.

It catalyses the reaction 3-dehydro-D-glucose 6-phosphate + L-glutamate = D-kanosamine 6-phosphate + 2-oxoglutarate. Its pathway is antibiotic biosynthesis; kanosamine biosynthesis. In terms of biological role, involved in the biosynthesis of kanosamine (3-amino-3-deoxy-D-glucose), which is known to have antibiotic and antifungal properties, and to be a precursor of the antibiotic neotrehalosadiamine (3,3'-diamino-3,3'-dideoxy-alpha,beta-trehalose (NTD)). Catalyzes the reversible pyridoxal phosphate-dependent transamination of 3-dehydro-alpha-D-glucose 6-phosphate to form alpha-D-kanosamine-6-phosphate. It can only use alpha-anomer and glutamate is the only amino donor. This Bacillus subtilis (strain 168) protein is 3-oxo-glucose-6-phosphate:glutamate aminotransferase (ntdA).